We begin with the raw amino-acid sequence, 156 residues long: ATP synthase subunit b (156 aa).

Residues 7–27 (LFAQMIVFFVLWWVVARFVWP) form a helical membrane-spanning segment.

Belongs to the ATPase B chain family. F-type ATPases have 2 components, F(1) - the catalytic core - and F(0) - the membrane proton channel. F(1) has five subunits: alpha(3), beta(3), gamma(1), delta(1), epsilon(1). F(0) has three main subunits: a(1), b(2) and c(10-14). The alpha and beta chains form an alternating ring which encloses part of the gamma chain. F(1) is attached to F(0) by a central stalk formed by the gamma and epsilon chains, while a peripheral stalk is formed by the delta and b chains.

Its subcellular location is the cell membrane. In terms of biological role, f(1)F(0) ATP synthase produces ATP from ADP in the presence of a proton or sodium gradient. F-type ATPases consist of two structural domains, F(1) containing the extramembraneous catalytic core and F(0) containing the membrane proton channel, linked together by a central stalk and a peripheral stalk. During catalysis, ATP synthesis in the catalytic domain of F(1) is coupled via a rotary mechanism of the central stalk subunits to proton translocation. Its function is as follows. Component of the F(0) channel, it forms part of the peripheral stalk, linking F(1) to F(0). The chain is ATP synthase subunit b from Polynucleobacter asymbioticus (strain DSM 18221 / CIP 109841 / QLW-P1DMWA-1) (Polynucleobacter necessarius subsp. asymbioticus).